A 514-amino-acid chain; its full sequence is Respiratory nitrate reductase 2 beta chain (514 aa).

3 consecutive 4Fe-4S ferredoxin-type domains span residues 7-35 (VGMV…GREG), 174-205 (TFMM…KREE), and 207-236 (GIVL…FNWK). Cys16, Cys19, Cys22, Cys26, Cys183, Cys186, and Cys191 together coordinate [4Fe-4S] cluster. Positions 195, 216, and 222 each coordinate [3Fe-4S] cluster. Cys226, Cys243, Cys246, Cys258, and Cys262 together coordinate [4Fe-4S] cluster.

As to quaternary structure, dimer of heterotrimers each composed of an alpha, a beta and a gamma chain. Alpha and beta are catalytic chains; gamma chains are involved in binding the enzyme complex to the cytoplasmic membrane. [4Fe-4S] cluster serves as cofactor. It depends on [3Fe-4S] cluster as a cofactor.

It is found in the cell membrane. The enzyme catalyses nitrate + a quinol = a quinone + nitrite + H2O. This is a second nitrate reductase enzyme which can substitute for the NRA enzyme and allows E.coli to use nitrate as an electron acceptor during anaerobic growth. The beta chain is an electron transfer unit containing four cysteine clusters involved in the formation of iron-sulfur centers. Electrons are transferred from the gamma chain to the molybdenum cofactor of the alpha subunit. This Escherichia coli (strain K12) protein is Respiratory nitrate reductase 2 beta chain (narY).